Consider the following 70-residue polypeptide: Beta-defensin 43 (70 aa).

The signal sequence occupies residues 1 to 22 (MRLLLSILGVLTLLSILPLARS). 2 disulfides stabilise this stretch: Cys-29-Cys-57 and Cys-36-Cys-50.

Belongs to the beta-defensin family.

It is found in the secreted. In terms of biological role, has bactericidal activity. This Rattus norvegicus (Rat) protein is Beta-defensin 43 (Defb43).